The following is a 901-amino-acid chain: Translation initiation factor IF-2 (901 aa).

A disordered region spans residues His-48–Pro-313. Over residues Ser-68–Val-82 the composition is skewed to polar residues. Residues Ala-106 to Trp-226 show a composition bias toward basic and acidic residues. Positions Ala-263–Ser-277 are enriched in basic residues. A compositionally biased stretch (basic and acidic residues) spans Lys-278 to Ala-291. In terms of domain architecture, tr-type G spans Pro-400 to Lys-569. The G1 stretch occupies residues Gly-409–Thr-416. Gly-409–Thr-416 lines the GTP pocket. The interval Gly-434 to His-438 is G2. The G3 stretch occupies residues Asp-455–Gly-458. GTP-binding positions include Asp-455–His-459 and Asn-509–Asp-512. Residues Asn-509–Asp-512 are G4. Positions Ser-545 to Lys-547 are G5.

The protein belongs to the TRAFAC class translation factor GTPase superfamily. Classic translation factor GTPase family. IF-2 subfamily.

It is found in the cytoplasm. In terms of biological role, one of the essential components for the initiation of protein synthesis. Protects formylmethionyl-tRNA from spontaneous hydrolysis and promotes its binding to the 30S ribosomal subunits. Also involved in the hydrolysis of GTP during the formation of the 70S ribosomal complex. This chain is Translation initiation factor IF-2, found in Edwardsiella ictaluri (strain 93-146).